A 296-amino-acid polypeptide reads, in one-letter code: Glycine N-acyltransferase (296 aa).

An N6-acetyllysine; alternate mark is found at Lys-16, Lys-127, and Lys-141. 3 positions are modified to N6-succinyllysine; alternate: Lys-16, Lys-127, and Lys-141. Lys-159 is subject to N6-acetyllysine. At Lys-169 the chain carries N6-succinyllysine. N6-acetyllysine; alternate is present on residues Lys-183 and Lys-256. Lys-183 and Lys-256 each carry N6-succinyllysine; alternate.

This sequence belongs to the glycine N-acyltransferase family. As to expression, predominantly expressed in liver (at protein level) and kidney. Down-regulated in hepatocellular carcinoma and other liver cancers.

The protein resides in the mitochondrion. The enzyme catalyses an acyl-CoA + glycine = an N-acylglycine + CoA + H(+). The catalysed reaction is benzoyl-CoA + glycine = N-benzoylglycine + CoA + H(+). Functionally, mitochondrial acyltransferase which transfers an acyl group to the N-terminus of glycine and glutamine, although much less efficiently. Can conjugate numerous substrates to form a variety of N-acylglycines, with a preference for benzoyl-CoA over phenylacetyl-CoA as acyl donors. Thereby detoxify xenobiotics, such as benzoic acid or salicylic acid, and endogenous organic acids, such as isovaleric acid. This Homo sapiens (Human) protein is Glycine N-acyltransferase (GLYAT).